The chain runs to 107 residues: Probable 4-amino-4-deoxy-L-arabinose-phosphoundecaprenol flippase subunit ArnE (107 aa).

The 75-residue stretch at 31-105 (RVWGWLALSL…IIVGIILLGG (75 aa)) folds into the EamA domain. The next 3 membrane-spanning stretches (helical) occupy residues 34 to 54 (GWLA…LFVL), 57 to 77 (VPVS…TLAA), and 85 to 105 (IALR…LLGG).

This sequence belongs to the ArnE family. Heterodimer of ArnE and ArnF.

It localises to the cell inner membrane. The protein operates within bacterial outer membrane biogenesis; lipopolysaccharide biosynthesis. In terms of biological role, translocates 4-amino-4-deoxy-L-arabinose-phosphoundecaprenol (alpha-L-Ara4N-phosphoundecaprenol) from the cytoplasmic to the periplasmic side of the inner membrane. In Enterobacter sp. (strain 638), this protein is Probable 4-amino-4-deoxy-L-arabinose-phosphoundecaprenol flippase subunit ArnE.